Here is an 81-residue protein sequence, read N- to C-terminus: Cytotoxin I-like P-15 (81 aa).

The first 21 residues, methionine 1 to threonine 21, serve as a signal peptide directing secretion. 4 disulfide bridges follow: cysteine 24–cysteine 42, cysteine 35–cysteine 59, cysteine 63–cysteine 74, and cysteine 75–cysteine 80.

Belongs to the three-finger toxin family. Short-chain subfamily. Type IA cytotoxin sub-subfamily. As to quaternary structure, monomer in solution; Homodimer and oligomer in the presence of negatively charged lipids forming a pore with a size ranging between 20 and 30 Angstroms. As to expression, expressed by the venom gland.

It is found in the secreted. The protein localises to the target cell membrane. Its function is as follows. Shows cytolytic activity on many different cells by forming pore in lipid membranes. In vivo, increases heart rate or kills the animal by cardiac arrest. In addition, it binds to heparin with high affinity, interacts with Kv channel-interacting protein 1 (KCNIP1) in a calcium-independent manner, and binds to integrin alpha-V/beta-3 (ITGAV/ITGB3) with moderate affinity. The polypeptide is Cytotoxin I-like P-15 (Naja atra (Chinese cobra)).